Consider the following 311-residue polypeptide: Thioredoxin reductase (311 aa).

35–42 (ERGIPGGQ) serves as a coordination point for FAD. A disulfide bridge connects residues C134 and C137. 277-286 (DVRDKGLRQI) contributes to the FAD binding site.

This sequence belongs to the class-II pyridine nucleotide-disulfide oxidoreductase family. As to quaternary structure, homodimer. It depends on FAD as a cofactor.

The protein resides in the cytoplasm. The catalysed reaction is [thioredoxin]-dithiol + NADP(+) = [thioredoxin]-disulfide + NADPH + H(+). The chain is Thioredoxin reductase (trxB) from Staphylococcus aureus (strain COL).